We begin with the raw amino-acid sequence, 332 residues long: Homeobox protein SIX3 (332 aa).

An interaction with TLE5 region spans residues 72–119 (APPEELSMFQLPTLNFSPEQVASVCETLEETGDIERLGRFLWSLPVAP). Positions 206 to 265 (GEQKTHCFKERTRSLLREWYLQDPYPNPSKKRELAQATGLTPTQVGNWFKNRRQRDRAAA) form a DNA-binding region, homeobox. The interval 232–234 (NPS) is bind to RHO promoter. 2 disordered regions span residues 232 to 251 (NPSK…TQVG) and 258 to 332 (RQRD…ECDV). Over residues 293-309 (SAESPSTAASPTTSVSS) the composition is skewed to low complexity. Positions 316–332 (TGTSILSVTSSDSECDV) are enriched in polar residues.

The protein belongs to the SIX/Sine oculis homeobox family. Interacts with EYA4; translocates EYA4 from the cytoplasm to the nucleus and promotes activation of their target genes. Interacts with MTA1 and HDAC2; represses its own transcription. Interacts with MTA1; facilitates the binding of SIX3 to the core DNA motif of SIX3 promoter. Interacts with EYA1; promotes EYA1 translocation to the nucleus. Interacts with TLE1 and TLE5 (via Q domain); can act in combination with either TLE1 and/or TLE5 leading to transcriptional repression or activation, respectively. Interacts (via homeobox) with NR4A3; differentially regulates the transcriptional activities NR4A3. Interacts with GMNN. Interacts with TLE4.

Its subcellular location is the nucleus. Transcriptional regulator which can act as both a transcriptional repressor and activator by binding a ATTA homeodomain core recognition sequence on these target genes. During forebrain development represses WNT1 expression allowing zona limitans intrathalamica formation and thereby ensuring proper anterio-posterior patterning of the diencephalon and formation of the rostral diencephalon. Acts as a direct upstream activator of SHH expression in the rostral diencephalon ventral midline and that in turn SHH maintains its expression. In addition, Six3 activity is required for the formation of the telencephalon. During postnatal stages of brain development is necessary for ependymal cell maturation by promoting the maturation of radial glia into ependymal cells through regulation of neuroblast proliferation and migration. Acts on the proliferation and differentiation of neural progenitor cells through activating transcription of CCND1 and CCND2. During early lens formation plays a role in lens induction and specification by activating directly PAX6 in the presumptive lens ectoderm. In turn PAX6 activates SIX3 resulting in activation of PDGFRA and CCND1 promoting cell proliferation. Also is required for the neuroretina development by directly suppressing WNT8B expression in the anterior neural plate territory. Its action during retina development and lens morphogenesis is TLE5 and TLE4-dependent manner. Furthermore, during eye development regulates several genes expression. Before and during early lens development represses the CRYGF promoter by binding a SIX repressor element. Directly activates RHO transcription, or cooperates with CRX or NRL. Six3 also functions in the formation of the proximodistal axis of the optic cup, and promotes the formation of optic vesicles-like structures. During pituitary development, acts in parallel or alternatively with HESX1 to control cell proliferation through Wnt/beta-catenin pathway. Plays a role in eye development by suppressing WNT1 expression and in dorsal-ventral patterning by repressing BMP signaling pathway. This is Homeobox protein SIX3 (SIX3) from Homo sapiens (Human).